A 124-amino-acid chain; its full sequence is UPF0102 protein MSMEG_2508/MSMEI_2448 (124 aa).

This sequence belongs to the UPF0102 family.

The sequence is that of UPF0102 protein MSMEG_2508/MSMEI_2448 from Mycolicibacterium smegmatis (strain ATCC 700084 / mc(2)155) (Mycobacterium smegmatis).